A 345-amino-acid polypeptide reads, in one-letter code: Phosphoribosylformylglycinamidine cyclo-ligase (345 aa).

Belongs to the AIR synthase family.

Its subcellular location is the cytoplasm. The enzyme catalyses 2-formamido-N(1)-(5-O-phospho-beta-D-ribosyl)acetamidine + ATP = 5-amino-1-(5-phospho-beta-D-ribosyl)imidazole + ADP + phosphate + H(+). It participates in purine metabolism; IMP biosynthesis via de novo pathway; 5-amino-1-(5-phospho-D-ribosyl)imidazole from N(2)-formyl-N(1)-(5-phospho-D-ribosyl)glycinamide: step 2/2. This Salmonella choleraesuis (strain SC-B67) protein is Phosphoribosylformylglycinamidine cyclo-ligase.